The primary structure comprises 923 residues: Mitochondrial 10-formyltetrahydrofolate dehydrogenase (923 aa).

The N-terminal 19 residues, 1-19 (MLRRGSQALRRFSTGRVYF), are a transit peptide targeting the mitochondrion; not cleaved. A hydrolase domain region spans residues 23–331 (LKLALIGQSL…PASQYFSTGE (309 aa)). Ser-31 is subject to Phosphoserine. At Lys-60 the chain carries N6-succinyllysine. 110–112 (QFI) is a binding site for (6R)-10-formyltetrahydrofolate. His-128 (proton donor) is an active-site residue. Asp-164 contacts (6R)-10-formyltetrahydrofolate. In terms of domain architecture, Carrier spans 339 to 416 (AEEVKVAETI…GFIQKVVRKL (78 aa)). O-(pantetheine 4'-phosphoryl)serine is present on Ser-375. The interval 438–923 (MVKMPYQCFI…LKTKTVTLEY (486 aa)) is aldehyde dehydrogenase domain. Residues 592–594 (IPW) and 618–621 (KPAQ) contribute to the NADP(+) site. Ser-650 is modified (phosphoserine). NADP(+) is bound by residues 651 to 656 (GGIAGQ) and 671 to 672 (GS). An N6-succinyllysine modification is found at Lys-681. Residue Glu-694 is the Proton acceptor of the active site. 694–695 (EL) is an NADP(+) binding site. Residue Cys-728 is the Proton donor of the active site. Lys-778 is an NADP(+) binding site. Position 788 is an N6-succinyllysine (Lys-788). An NADP(+)-binding site is contributed by 825–827 (ESF). Lys-903 is subject to N6-acetyllysine.

This sequence in the N-terminal section; belongs to the GART family. It in the C-terminal section; belongs to the aldehyde dehydrogenase family. ALDH1L subfamily. Phosphopantetheinylation at Ser-375 by AASDHPPT is required for the formyltetrahydrofolate dehydrogenase activity. As to expression, highly expressed in pancreas, heart, brain and skeletal muscle.

It localises to the mitochondrion. The catalysed reaction is (6R)-10-formyltetrahydrofolate + NADP(+) + H2O = (6S)-5,6,7,8-tetrahydrofolate + CO2 + NADPH + H(+). In terms of biological role, mitochondrial 10-formyltetrahydrofolate dehydrogenase that catalyzes the NADP(+)-dependent conversion of 10-formyltetrahydrofolate to tetrahydrofolate and carbon dioxide. The polypeptide is Mitochondrial 10-formyltetrahydrofolate dehydrogenase (Homo sapiens (Human)).